The following is a 323-amino-acid chain: ADP-L-glycero-D-manno-heptose-6-epimerase (323 aa).

NADP(+)-binding positions include 10–11 (FI), 31–32 (DN), Lys-38, Lys-53, 75–79 (EGACS), and Asn-92. Tyr-139 serves as the catalytic Proton acceptor. Residue Lys-143 coordinates NADP(+). Asn-168 serves as a coordination point for substrate. NADP(+) contacts are provided by Val-169 and Lys-177. Residue Lys-177 is the Proton acceptor of the active site. Residues Asp-179, Lys-186, 200–203 (FGAY), Arg-213, and Tyr-277 each bind substrate.

It belongs to the NAD(P)-dependent epimerase/dehydratase family. HldD subfamily. Homopentamer. It depends on NADP(+) as a cofactor.

The catalysed reaction is ADP-D-glycero-beta-D-manno-heptose = ADP-L-glycero-beta-D-manno-heptose. It participates in nucleotide-sugar biosynthesis; ADP-L-glycero-beta-D-manno-heptose biosynthesis; ADP-L-glycero-beta-D-manno-heptose from D-glycero-beta-D-manno-heptose 7-phosphate: step 4/4. In terms of biological role, catalyzes the interconversion between ADP-D-glycero-beta-D-manno-heptose and ADP-L-glycero-beta-D-manno-heptose via an epimerization at carbon 6 of the heptose. This is ADP-L-glycero-D-manno-heptose-6-epimerase from Hydrogenovibrio crunogenus (strain DSM 25203 / XCL-2) (Thiomicrospira crunogena).